The following is a 272-amino-acid chain: MSQHKLSSCSPIGIFDSGIGGLTVLKAVQAALPSERLLYFGDTARVPYGTKSQVTIRKYAREDTELLMKHQPKLIIVACNTVSALALDVVEQTAGDILVIGVLKAGAELAAHRTKSGRIGVIGTQATIGSNAYSCAIREENDALEVTPKACPLFVPLAEEGFIDHPATRLVAEEYLSAFTGKEIDTLVLGCTHYPILRKVIESIAGPQITIIDSAEAVASKAKELLSKHGLLNQSSATTLPHLMVSDLPQKFRELYRLFMGTELPDVELVGM.

Substrate contacts are provided by residues 16–17 and 48–49; these read DS and YG. Cys79 (proton donor/acceptor) is an active-site residue. Residue 80–81 participates in substrate binding; the sequence is NT. Cys191 (proton donor/acceptor) is an active-site residue. Residue 192–193 coordinates substrate; the sequence is TH.

This sequence belongs to the aspartate/glutamate racemases family.

The enzyme catalyses L-glutamate = D-glutamate. Its pathway is cell wall biogenesis; peptidoglycan biosynthesis. In terms of biological role, provides the (R)-glutamate required for cell wall biosynthesis. This Chlorobaculum parvum (strain DSM 263 / NCIMB 8327) (Chlorobium vibrioforme subsp. thiosulfatophilum) protein is Glutamate racemase.